Consider the following 69-residue polypeptide: DNA-directed RNA polymerase subunit epsilon (69 aa).

It belongs to the RNA polymerase subunit epsilon family. In terms of assembly, RNAP is composed of a core of 2 alpha, a beta and a beta' subunit. The core is associated with a delta subunit, and at least one of epsilon or omega. When a sigma factor is associated with the core the holoenzyme is formed, which can initiate transcription.

It carries out the reaction RNA(n) + a ribonucleoside 5'-triphosphate = RNA(n+1) + diphosphate. Its function is as follows. A non-essential component of RNA polymerase (RNAP). This chain is DNA-directed RNA polymerase subunit epsilon, found in Lysinibacillus sphaericus (strain C3-41).